The primary structure comprises 457 residues: Adenylosuccinate synthetase isozyme 2 (457 aa).

GTP is bound by residues 40 to 46 and 68 to 70; these read GDEGKGK and GHT. Residue aspartate 41 is the Proton acceptor of the active site. Mg(2+) is bound by residues aspartate 41 and glycine 68. Aspartate 41 serves as a coordination point for substrate. IMP contacts are provided by residues 41–44, 66–69, threonine 163, arginine 177, asparagine 256, threonine 271, and arginine 335; these read DEGK and NAGH. Histidine 69 acts as the Proton donor in catalysis. 331 to 337 serves as a coordination point for substrate; that stretch reads VTTGRKR. GTP-binding positions include arginine 337, 363 to 365, and 445 to 448; these read KLD and GVGK.

It belongs to the adenylosuccinate synthetase family. Homodimer. Mg(2+) serves as cofactor.

The protein localises to the cytoplasm. It is found in the mitochondrion. The catalysed reaction is IMP + L-aspartate + GTP = N(6)-(1,2-dicarboxyethyl)-AMP + GDP + phosphate + 2 H(+). Its pathway is purine metabolism; AMP biosynthesis via de novo pathway; AMP from IMP: step 1/2. With respect to regulation, inhibited competitively by AMP and IMP and non-competitively by fructose 1,6-bisphosphate. Its function is as follows. Plays an important role in the de novo pathway and in the salvage pathway of purine nucleotide biosynthesis. Catalyzes the first committed step in the biosynthesis of AMP from IMP. In Xenopus laevis (African clawed frog), this protein is Adenylosuccinate synthetase isozyme 2 (adss2).